The primary structure comprises 128 residues: Ribonuclease P protein component (128 aa).

The protein belongs to the RnpA family. Consists of a catalytic RNA component (M1 or rnpB) and a protein subunit.

The catalysed reaction is Endonucleolytic cleavage of RNA, removing 5'-extranucleotides from tRNA precursor.. Its function is as follows. RNaseP catalyzes the removal of the 5'-leader sequence from pre-tRNA to produce the mature 5'-terminus. It can also cleave other RNA substrates such as 4.5S RNA. The protein component plays an auxiliary but essential role in vivo by binding to the 5'-leader sequence and broadening the substrate specificity of the ribozyme. This is Ribonuclease P protein component from Prochlorococcus marinus (strain NATL1A).